The chain runs to 142 residues: NADH-quinone oxidoreductase subunit A (142 aa).

The next 3 membrane-spanning stretches (helical) occupy residues 8–28 (FGTVFVFLLLGIIFVVGGYLT), 63–83 (FYVVALIFIIFDVEVVFLFPW), and 93–113 (FALIEALVFAGILVIGLVYAW).

It belongs to the complex I subunit 3 family. NDH-1 is composed of 14 different subunits. Subunits NuoA, H, J, K, L, M, N constitute the membrane sector of the complex.

It localises to the cell inner membrane. The catalysed reaction is a quinone + NADH + 5 H(+)(in) = a quinol + NAD(+) + 4 H(+)(out). In terms of biological role, NDH-1 shuttles electrons from NADH, via FMN and iron-sulfur (Fe-S) centers, to quinones in the respiratory chain. The immediate electron acceptor for the enzyme in this species is believed to be a menaquinone. Couples the redox reaction to proton translocation (for every two electrons transferred, four hydrogen ions are translocated across the cytoplasmic membrane), and thus conserves the redox energy in a proton gradient. The polypeptide is NADH-quinone oxidoreductase subunit A (Chlorobium phaeobacteroides (strain BS1)).